A 485-amino-acid chain; its full sequence is Pre-glycoprotein polyprotein GP complex (485 aa).

A lipid anchor (N-myristoyl glycine; by host) is attached at Gly2. At 2 to 17 (GQLISFFGEIPTILQE) the chain is on the extracellular side. The helical transmembrane segment at 18–33 (ALNIALIAVSIIATIK) threads the bilayer. Residues 34-58 (GVVNVWKSGLIQLLMFVMLAGRSCS) are Cytoplasmic-facing. Cys57 provides a ligand contact to Zn(2+). At 59 to 424 (VQIGHHLELE…QGRTPLSLVD (366 aa)) the chain is on the extracellular side. 4 disulfide bridges follow: Cys85–Cys225, Cys271–Cys284, Cys293–Cys302, and Cys356–Cys377. Asn88, Asn128, Asn179, and Asn218 each carry an N-linked (GlcNAc...) asparagine; by host glycan. N-linked (GlcNAc...) asparagine; by host glycosylation is found at Asn357, Asn365, Asn382, and Asn387. The helical transmembrane segment at 425-445 (VCFWSTLFYTASIFLHLIRIP) threads the bilayer. At 446-485 (THRHIVGEGCPKPHRLRADSTCACGLYKQKRRPLKWVRSN) the chain is on the cytoplasmic side. Zn(2+) contacts are provided by His447, His449, Cys455, His459, Cys467, and Cys469.

This sequence belongs to the arenaviridae GPC protein family. Interacts with glycoprotein G2. Part of the GP complex (GP-C) together with glycoprotein G1 and glycoprotein G2. The GP-complex interacts with protein Z, which interacts with ribonucleocapsid; these interactions may induce virion budding. In terms of assembly, homotrimer; disulfide-linked. In pre-fusion state, G1 homotrimers bind G2 homotrimers via ionic interactions. Part of the GP complex (GP-C) together with glycoprotein G2 and the stable signal peptide. The GP-complex interacts with protein Z, which interacts with ribonucleocapsid; these interactions may induce virion budding. As to quaternary structure, homotrimer. Interacts with the stable signal peptide. In pre-fusion state, G2 homotrimers bind G1 homotrimers via ionic interactions. Part of the GP complex (GP-C) together with glycoprotein G1 and the stable signal peptide. Acidification in the endosome triggers rearrangements, which ultimately leads to a 6 helix bundle formed by the two heptad repeat domains (HR1 and HR2) in post-fusion state. The GP-complex interacts with protein Z, which interacts with ribonucleocapsid; these interactions may induce virion budding. In terms of processing, specific enzymatic cleavages in vivo yield mature proteins. GP-C polyprotein is cleaved in the endoplasmic reticulum by the host protease MBTPS1. Only cleaved glycoprotein is incorporated into virions. The SSP remains stably associated with the GP complex following cleavage by signal peptidase and plays crucial roles in the trafficking of GP through the secretory pathway. Post-translationally, myristoylation is necessary for GP2-mediated fusion activity.

The protein localises to the virion membrane. It is found in the host endoplasmic reticulum membrane. Its subcellular location is the host Golgi apparatus membrane. The protein resides in the host cell membrane. Its function is as follows. Functions as a cleaved signal peptide that is retained as the third component of the GP complex (GP-C). Helps to stabilize the spike complex in its native conformation. The SSP is required for efficient glycoprotein expression, post-translational maturation cleavage of G1 and G2, glycoprotein transport to the cell surface plasma membrane, formation of infectious virus particles, and acid pH-dependent glycoprotein-mediated cell fusion. Forms the virion spikes together with glycoprotein G2. The glycoprotein spike trimers are connected to the underlying matrix. Interacts with the host receptor leading to virus endocytosis. Functionally, forms the virion spikes together with glycoprotein G1. The glycoprotein spike trimers are connected to the underlying matrix. Class I viral fusion protein that directs fusion of viral and host endosomal membranes, leading to delivery of the nucleocapsid into the cytoplasm. Membrane fusion is mediated by irreversible conformational changes induced by acidification. This Sigmodon hispidus (Hispid cotton rat) protein is Pre-glycoprotein polyprotein GP complex.